The chain runs to 88 residues: Toxin RelE2 (88 aa).

The protein belongs to the RelE toxin family.

Toxic component of a type II toxin-antitoxin (TA) system. Its toxic effect is neutralized by coexpression with cognate antitoxin RelB2 but no other ParD or RelB antitoxin. The chain is Toxin RelE2 (relE2) from Caulobacter vibrioides (strain ATCC 19089 / CIP 103742 / CB 15) (Caulobacter crescentus).